A 39-amino-acid chain; its full sequence is RGCIELGEDCDGSKDDCQCCRDNGFCSCYTFPYKWGCIC.

Disulfide bonds are present. Expressed by the venom gland.

The protein resides in the secreted. In terms of biological role, omega-agatoxins are antagonists of voltage-gated calcium channels (Cav). The protein is U2-ctenitoxin-Co1a of Ctenus ornatus (Brazilian spider).